The following is a 490-amino-acid chain: Actin-related protein 6 (490 aa).

This sequence belongs to the actin family. ARP6 subfamily.

It is found in the cytoplasm. The protein localises to the cytoskeleton. The protein is Actin-related protein 6 of Dictyostelium discoideum (Social amoeba).